Here is a 425-residue protein sequence, read N- to C-terminus: tRNA(Ile)-lysidine synthase (425 aa).

ATP is bound at residue 37 to 42 (SGGKDS).

This sequence belongs to the tRNA(Ile)-lysidine synthase family.

The protein localises to the cytoplasm. The catalysed reaction is cytidine(34) in tRNA(Ile2) + L-lysine + ATP = lysidine(34) in tRNA(Ile2) + AMP + diphosphate + H(+). Its function is as follows. Ligates lysine onto the cytidine present at position 34 of the AUA codon-specific tRNA(Ile) that contains the anticodon CAU, in an ATP-dependent manner. Cytidine is converted to lysidine, thus changing the amino acid specificity of the tRNA from methionine to isoleucine. This chain is tRNA(Ile)-lysidine synthase, found in Leptospira borgpetersenii serovar Hardjo-bovis (strain JB197).